Reading from the N-terminus, the 585-residue chain is Frizzled-5 (585 aa).

A signal peptide spans 1-26 (MARPDPSAPPSLLLLLLAQLVGRAAA). Topologically, residues 27 to 238 (ASKAPVCQEI…PDERTFATFW (212 aa)) are extracellular. In terms of domain architecture, FZ spans 28–150 (SKAPVCQEIT…GDAEVLCMDY (123 aa)). Intrachain disulfides connect cysteine 33-cysteine 94, cysteine 41-cysteine 87, cysteine 78-cysteine 116, cysteine 105-cysteine 147, and cysteine 109-cysteine 133. Residue asparagine 47 is glycosylated (N-linked (GlcNAc...) asparagine). Asparagine 151 carries N-linked (GlcNAc...) asparagine glycosylation. The interval 156 to 182 (TTASPKSFPAKPTLPGPPGAPSSGGEC) is disordered. Residues 239-259 (IGLWSVLCFISTSTTVATFLI) traverse the membrane as a helical segment. Residues 260–270 (DMERFRYPERP) are Cytoplasmic-facing. A helical membrane pass occupies residues 271 to 291 (IIFLSACYLCVSLGFLVRLVV). Residues 292–315 (GHASVACSREHSHIHYETTGPALC) are Extracellular-facing. A helical transmembrane segment spans residues 316–336 (TVVFLLVYFFGMASSIWWVIL). At 337-358 (SLTWFLAAGMKWGNEAIAGYAQ) the chain is on the cytoplasmic side. Residues 359–379 (YFHLAAWLIPSVKSITALALS) traverse the membrane as a helical segment. Over 380–402 (SVDGDPVAGVCYVGNQNLNSLRG) the chain is Extracellular. Residues 403–423 (FVLGPLVLYLLVGTLFLLAGF) traverse the membrane as a helical segment. Topologically, residues 424–449 (VSLFRIRSVIKQGGTKTDKLEKLMIR) are cytoplasmic. The chain crosses the membrane as a helical span at residues 450–470 (IGIFTLLYTVPASIVVACYLY). Topologically, residues 471-500 (EQHYRESWEAALTCACPGSDAGQPRAKPEY) are extracellular. Residues 501–521 (WVLMLKYFMCLVVGITSGVWI) traverse the membrane as a helical segment. Residues 522–585 (WSGKTLESWR…YHKQVSLSHV (64 aa)) are Cytoplasmic-facing. A Lys-Thr-X-X-X-Trp motif, mediates interaction with the PDZ domain of Dvl family members motif is present at residues 525 to 530 (KTLESW). Positions 583–585 (SHV) match the PDZ-binding motif.

It belongs to the G-protein coupled receptor Fz/Smo family. Binding of unsaturated fatty acid molecules (via FZ domain) promotes homodimerization (via FZ domain). Interacts with WNT2B. Interacts with WNT7A. Interacts with GOPC. In terms of processing, ubiquitinated by RNF43 and ZNRF3, leading to its degradation by the proteasome.

The protein localises to the cell membrane. It is found in the golgi apparatus membrane. Its subcellular location is the synapse. The protein resides in the perikaryon. It localises to the cell projection. The protein localises to the dendrite. It is found in the axon. In terms of biological role, receptor for Wnt proteins. Functions in the canonical Wnt/beta-catenin signaling pathway. In vitro activates WNT2, WNT10B, WNT5A, but not WNT2B or WNT4 signaling. In neurons, activation by WNT7A promotes formation of synapses. May be involved in transduction and intercellular transmission of polarity information during tissue morphogenesis and/or in differentiated tissues. Plays a role in yolk sac angiogenesis and in placental vascularization. Plays a role in ocular development. The protein is Frizzled-5 (Fzd5) of Rattus norvegicus (Rat).